We begin with the raw amino-acid sequence, 833 residues long: AdoMet-dependent rRNA methyltransferase SPB1 (833 aa).

Positions 59, 61, 79, 95, and 120 each coordinate S-adenosyl-L-methionine. Residue Lys-160 is the Proton acceptor of the active site. Coiled-coil stretches lie at residues 348 to 389 (EEEQ…QLNM) and 453 to 481 (RDEL…SERD). Over residues 477–493 (KSERDAKFRAKQARESS) the composition is skewed to basic and acidic residues. Disordered stretches follow at residues 477–532 (KSER…SDDD), 592–645 (KRKL…EKHS), and 776–810 (VTKK…GKYK). 2 stretches are compositionally biased toward acidic residues: residues 505–532 (QSDE…SDDD) and 622–634 (EDGD…DSEE). Basic and acidic residues predominate over residues 635–645 (EAKRTKQEKHS). The stretch at 730-782 (AEAKARKKHRAVARLEKLKKKAGLINDDSDKSEKDKAEEIAKLMRKVTKKAKQ) forms a coiled coil.

The protein belongs to the class I-like SAM-binding methyltransferase superfamily. RNA methyltransferase RlmE family. SPB1 subfamily. As to quaternary structure, component of the nucleolar and nucleoplasmic pre-60S ribosomal particle.

It is found in the nucleus. The protein localises to the nucleolus. The catalysed reaction is a ribonucleotide in rRNA + S-adenosyl-L-methionine = a 2'-O-methylribonucleotide in rRNA + S-adenosyl-L-homocysteine + H(+). Functionally, required for proper assembly of pre-ribosomal particles during the biogenesis of the 60S ribosomal subunit. This is AdoMet-dependent rRNA methyltransferase SPB1 from Kluyveromyces lactis (strain ATCC 8585 / CBS 2359 / DSM 70799 / NBRC 1267 / NRRL Y-1140 / WM37) (Yeast).